A 555-amino-acid chain; its full sequence is Dimethylaniline monooxygenase [N-oxide-forming] 4 (555 aa).

Residues 9 to 13, Glu32, and 40 to 41 each bind FAD; these read GAGVS and LW. NADP(+) is bound by residues 60–61 and 195–198; these read TN and SGGD. The helical transmembrane segment at 515–532 threads the bilayer; that stretch reads YLKVWGAPLLLASVLLIC.

It belongs to the FMO family. FAD serves as cofactor. In terms of tissue distribution, kidney and liver.

The protein resides in the microsome membrane. It localises to the endoplasmic reticulum membrane. The catalysed reaction is N,N-dimethylaniline + NADPH + O2 + H(+) = N,N-dimethylaniline N-oxide + NADP(+) + H2O. In terms of biological role, this protein is involved in the oxidative metabolism of a variety of xenobiotics such as drugs and pesticides. In Oryctolagus cuniculus (Rabbit), this protein is Dimethylaniline monooxygenase [N-oxide-forming] 4 (FMO4).